Here is a 321-residue protein sequence, read N- to C-terminus: Sideroflexin-1-3 (321 aa).

The next 5 membrane-spanning stretches (helical) occupy residues Ile101–Trp121, Leu146–Val168, Leu174–Cys194, Ala220–Met240, and Ile266–Phe286.

This sequence belongs to the sideroflexin family.

It is found in the mitochondrion membrane. Mitochondrial amino-acid transporter that mediates transport of serine into mitochondria. The protein is Sideroflexin-1-3 of Drosophila melanogaster (Fruit fly).